We begin with the raw amino-acid sequence, 836 residues long: Transcriptional regulatory protein UME6 (836 aa).

Basic and acidic residues predominate over residues 1-14 (MLDKARSQSKHMDE). Disordered regions lie at residues 1 to 77 (MLDK…IESL), 92 to 168 (STCA…CNGH), 218 to 332 (HLPP…DDQC), and 381 to 464 (NESS…GFFY). Composition is skewed to polar residues over residues 39–48 (SRATLMNSSQ), 61–77 (GANSRHPTISSASIESL), and 92–112 (STCAPNNTPVHTPSGSPSLKV). Residue S114 is modified to Phosphoserine. The segment covering 117-126 (DIKDDPKEND) has biased composition (basic and acidic residues). Phosphoserine is present on residues S141, S150, and S228. Low complexity predominate over residues 226 to 236 (AVSSPGTTAAG). Over residues 258-272 (TSANKNNGKTTNSPM) the composition is skewed to polar residues. Low complexity predominate over residues 273 to 305 (SILSRNNSTNNNDNNSIQSSDSRESSNNNEIGG). Residues S316 and S318 each carry the phosphoserine modification. Positions 316-325 (SPSNDSQVQH) are enriched in polar residues. The segment covering 381-398 (NESSSNNASSNTDTPTNS) has biased composition (low complexity). Residues 399 to 414 (RHANTSSSITSRNNFQ) are compositionally biased toward polar residues. The span at 426-446 (PTSASSFTSTNNNNPQRNNIN) shows a compositional bias: low complexity. The interval 508–594 (NSASSSTKLD…QPIFESNNST (87 aa)) is SIN3-binding. The interval 636-766 (NGKRIDRRLS…ATSSTSQGTR (131 aa)) is disordered. Position 645 is a phosphoserine (S645). The span at 670–679 (VASQTNSDYN) shows a compositional bias: polar residues. A compositionally biased stretch (low complexity) spans 680–702 (SLGESSTSSAPSSPSLKASSGLA). Over residues 718-739 (SKGKNVKPKAKSKAKQSSKKRP) the composition is skewed to basic residues. Low complexity predominate over residues 740–751 (NNTTSKSKANNS). The zn(2)-C6 fungal-type DNA-binding region spans 771-798 (CWICRLRKKKCTEERPHCFNCERLKLDC).

In terms of assembly, component of the RPD3C(L) complex composed of at least ASH1, CTI6, DEP1, PHO23, RPD3, RXT2, RXT3, SAP30, SDS3, SIN3, UME1 and UME6. Interacts with RIM11, MCK1 and IME1. In terms of processing, phosphorylated by RIM11 and MCK1.

It is found in the nucleus. Its function is as follows. Component of the RPD3C(L) histone deacetylase complex (HDAC) responsible for the deacetylation of lysine residues on the N-terminal part of the core histones (H2A, H2B, H3 and H4). Histone deacetylation gives a tag for epigenetic repression and plays an important role in transcriptional regulation, cell cycle progression and developmental events. Binds to the URS1 site (5'-AGCCGCCGA-3') and recruits the RPD3 histone deacetylase complex to the promoters to negatively regulate the expression of many genes including CAR1 (arginase), several required for sporulation, mating type switching, inositol metabolism, and oxidative carbon metabolism. Also recruits the ISW2 chromatin remodeling complex to promoters in a second gene repression pathway. Associates with the master regulator of meiosis IME1 in order to activate the expression of meiosis genes. Has both a positive and negative role in regulating phospholipid biosynthesis. The protein is Transcriptional regulatory protein UME6 (UME6) of Saccharomyces cerevisiae (strain ATCC 204508 / S288c) (Baker's yeast).